The following is a 298-amino-acid chain: uncharacterized protein (298 aa).

The next 8 helical transmembrane spans lie at Ser-5–Trp-25, Val-52–Leu-72, Leu-105–Val-125, Ile-138–Leu-158, Ile-163–Ala-183, Gly-208–Thr-228, Leu-236–Ile-256, and Gly-273–Ile-293.

This sequence belongs to the CDS family.

Its subcellular location is the cell membrane. This is an uncharacterized protein from Escherichia coli (strain K12).